Here is a 239-residue protein sequence, read N- to C-terminus: Pathogenesis-related protein 5 (239 aa).

A signal peptide spans 1-23; sequence MANISSIHILFLVFITSGIAVMA. 8 disulfide bridges follow: C32/C238, C79/C89, C94/C99, C146/C228, C151/C211, C159/C174, C178/C187, and C188/C198.

Belongs to the thaumatin family.

The protein localises to the secreted. It localises to the extracellular space. It is found in the apoplast. Partially responsible for acquired pathogen resistance. In Arabidopsis thaliana (Mouse-ear cress), this protein is Pathogenesis-related protein 5.